Consider the following 306-residue polypeptide: N-acetylmuramic acid 6-phosphate etherase (306 aa).

Residues 55 to 218 (AAATLLAGGR…STGAMIKIGK (164 aa)) enclose the SIS domain. The active-site Proton donor is the Glu-83. The active site involves Glu-114.

The protein belongs to the GCKR-like family. MurNAc-6-P etherase subfamily. In terms of assembly, homodimer.

It catalyses the reaction N-acetyl-D-muramate 6-phosphate + H2O = N-acetyl-D-glucosamine 6-phosphate + (R)-lactate. It functions in the pathway amino-sugar metabolism; 1,6-anhydro-N-acetylmuramate degradation. Its pathway is amino-sugar metabolism; N-acetylmuramate degradation. The protein operates within cell wall biogenesis; peptidoglycan recycling. In terms of biological role, specifically catalyzes the cleavage of the D-lactyl ether substituent of MurNAc 6-phosphate, producing GlcNAc 6-phosphate and D-lactate. Together with AnmK, is also required for the utilization of anhydro-N-acetylmuramic acid (anhMurNAc) either imported from the medium or derived from its own cell wall murein, and thus plays a role in cell wall recycling. The protein is N-acetylmuramic acid 6-phosphate etherase of Erwinia tasmaniensis (strain DSM 17950 / CFBP 7177 / CIP 109463 / NCPPB 4357 / Et1/99).